The following is a 120-amino-acid chain: Ribonuclease P protein component (120 aa).

This sequence belongs to the RnpA family. Consists of a catalytic RNA component (M1 or rnpB) and a protein subunit.

It catalyses the reaction Endonucleolytic cleavage of RNA, removing 5'-extranucleotides from tRNA precursor.. In terms of biological role, RNaseP catalyzes the removal of the 5'-leader sequence from pre-tRNA to produce the mature 5'-terminus. It can also cleave other RNA substrates such as 4.5S RNA. The protein component plays an auxiliary but essential role in vivo by binding to the 5'-leader sequence and broadening the substrate specificity of the ribozyme. The polypeptide is Ribonuclease P protein component (Pseudoalteromonas atlantica (strain T6c / ATCC BAA-1087)).